The primary structure comprises 422 residues: Serine--tRNA ligase (422 aa).

Residue 229–231 coordinates L-serine; the sequence is TAE. ATP is bound at residue 260 to 262; the sequence is RKE. E283 is an L-serine binding site. 347 to 350 contacts ATP; that stretch reads EISS. S383 provides a ligand contact to L-serine.

The protein belongs to the class-II aminoacyl-tRNA synthetase family. Type-1 seryl-tRNA synthetase subfamily. As to quaternary structure, homodimer. The tRNA molecule binds across the dimer.

The protein localises to the cytoplasm. The enzyme catalyses tRNA(Ser) + L-serine + ATP = L-seryl-tRNA(Ser) + AMP + diphosphate + H(+). It carries out the reaction tRNA(Sec) + L-serine + ATP = L-seryl-tRNA(Sec) + AMP + diphosphate + H(+). It participates in aminoacyl-tRNA biosynthesis; selenocysteinyl-tRNA(Sec) biosynthesis; L-seryl-tRNA(Sec) from L-serine and tRNA(Sec): step 1/1. Functionally, catalyzes the attachment of serine to tRNA(Ser). Is also able to aminoacylate tRNA(Sec) with serine, to form the misacylated tRNA L-seryl-tRNA(Sec), which will be further converted into selenocysteinyl-tRNA(Sec). The polypeptide is Serine--tRNA ligase (Geotalea uraniireducens (strain Rf4) (Geobacter uraniireducens)).